A 418-amino-acid polypeptide reads, in one-letter code: MDIKDYVINIAKNSKLAAKKLSYADTNTKNKALIEMSKALLENKDYILSQNKIDIENAEKIGTSKALIDRLTLNDKRITDMAEALIKTSSLQDPIGEVIKMWKTPDELQIGQMRVPLGVIGIIYEARPNVTVDAAALCIKSGNSVILRGGKEAINSNTAIAKIIKNAVVTAGLPDGSIEFIDITDRETVNVMMRLNGLIDVLIPRGGAGLIKSVVENSSVPVIETGTGNCHVYVDKYADFDKAERIIINAKLQRPAVCNAMESLLVHKDVAHEFLPRISSKLKELKVQIRGCAATQKIVKDIVPATDEDFGKEFLDLILSVKVVDSLEEAIDHIFKYSTKHSEAIITENYTNAQRFLKEVDAAAVYVNASTRFTDGEQFGFGGEIGISTQKLHARGPMGLEQLTTTKYVIYGDGQIRK.

The protein belongs to the gamma-glutamyl phosphate reductase family.

It is found in the cytoplasm. It catalyses the reaction L-glutamate 5-semialdehyde + phosphate + NADP(+) = L-glutamyl 5-phosphate + NADPH + H(+). Its pathway is amino-acid biosynthesis; L-proline biosynthesis; L-glutamate 5-semialdehyde from L-glutamate: step 2/2. Its function is as follows. Catalyzes the NADPH-dependent reduction of L-glutamate 5-phosphate into L-glutamate 5-semialdehyde and phosphate. The product spontaneously undergoes cyclization to form 1-pyrroline-5-carboxylate. This Clostridium acetobutylicum (strain ATCC 824 / DSM 792 / JCM 1419 / IAM 19013 / LMG 5710 / NBRC 13948 / NRRL B-527 / VKM B-1787 / 2291 / W) protein is Gamma-glutamyl phosphate reductase.